Here is a 483-residue protein sequence, read N- to C-terminus: Argininosuccinate lyase (483 aa).

Belongs to the lyase 1 family. Argininosuccinate lyase subfamily.

The protein resides in the cytoplasm. It catalyses the reaction 2-(N(omega)-L-arginino)succinate = fumarate + L-arginine. It functions in the pathway amino-acid biosynthesis; L-arginine biosynthesis; L-arginine from L-ornithine and carbamoyl phosphate: step 3/3. This Archaeoglobus fulgidus (strain ATCC 49558 / DSM 4304 / JCM 9628 / NBRC 100126 / VC-16) protein is Argininosuccinate lyase.